A 554-amino-acid chain; its full sequence is Macrophage colony-stimulating factor 1 (554 aa).

A signal peptide spans 1 to 32 (MTAPGAAGRCPPTTWLGSLLLLVCLLASRSIT). The Lumenal portion of the chain corresponds to 33–496 (EEVSEYCSHM…GSFSPQLQES (464 aa)). Intrachain disulfides connect cysteine 39-cysteine 122, cysteine 80-cysteine 171, and cysteine 134-cysteine 178. Residues asparagine 154 and asparagine 172 are each glycosylated (N-linked (GlcNAc...) asparagine). The tract at residues 224-488 (EDSEGTEGSS…TGHERQSEGS (265 aa)) is disordered. A Phosphothreonine; by FAM20C modification is found at threonine 266. Serine 309 carries an O-linked (Xyl...) (chondroitin sulfate) serine glycan. The span at 344 to 354 (LSASSPLPASA) shows a compositional bias: low complexity. O-linked (GalNAc...) threonine glycosylation is found at threonine 363 and threonine 365. A compositionally biased stretch (polar residues) spans 404–433 (RISSLRPQGLSNPSTLSAQPQLSRSHSSGS). An O-glycosylated at one site region spans residues 406 to 426 (SSLRPQGLSNPSTLSAQPQLS). Positions 440–453 (LEGRRSTRDRRSPA) are enriched in basic and acidic residues. A helical membrane pass occupies residues 497 to 517 (VFHLLVPSVILVLLAVGGLLF). At 518 to 554 (YRWRRRSHQEPQRADSPLEQPEGSPLTQDDRQVELPV) the chain is on the cytoplasmic side. Residues 526–554 (QEPQRADSPLEQPEGSPLTQDDRQVELPV) form a disordered region. Basic and acidic residues predominate over residues 545–554 (QDDRQVELPV).

Homodimer or heterodimer; disulfide-linked. Likely to exist in multiple forms: homodimer consisting of 2 identical 150-200 kDa proteoglycan subunits, heterodimer consisting of a 150-200 kDa proteoglycan subunit and a truncated 43 kDa subunit, and homodimer consisting of 2 identical 43 kDa subunits. Interacts with CSF1R. In terms of processing, N-glycosylated. O-glycosylated; contains chondroitin sulfate. O-glycosylated with core 1 or possibly core 8 glycans. Post-translationally, O-glycosylated.

The protein localises to the cell membrane. Its subcellular location is the secreted. It localises to the extracellular space. Functionally, cytokine that plays an essential role in the regulation of survival, proliferation and differentiation of hematopoietic precursor cells, especially mononuclear phagocytes, such as macrophages and monocytes. Promotes the release of pro-inflammatory chemokines, and thereby plays an important role in innate immunity and in inflammatory processes. Plays an important role in the regulation of osteoclast proliferation and differentiation, the regulation of bone resorption, and is required for normal bone development. Required for normal male and female fertility. Promotes reorganization of the actin cytoskeleton, regulates formation of membrane ruffles, cell adhesion and cell migration. Plays a role in lipoprotein clearance. In Homo sapiens (Human), this protein is Macrophage colony-stimulating factor 1 (CSF1).